Reading from the N-terminus, the 382-residue chain is Beta-1,4-galactosyltransferase 6 (382 aa).

The Cytoplasmic segment spans residues 1 to 14 (MSVLRRMMRVSNRS). The chain crosses the membrane as a helical; Signal-anchor for type II membrane protein span at residues 15-35 (LLAFIFFFSLSSSCLYFIYVA). The Lumenal segment spans residues 36–382 (PGIANTYLFM…MPELAPIEDY (347 aa)). 6 N-linked (GlcNAc...) asparagine glycosylation sites follow: N71, N75, N83, N84, N99, and N122. An intrachain disulfide couples C108 to C152. UDP-alpha-D-galactose is bound by residues 163–167 (PFRNR), 202–204 (FNR), 229–230 (VD), Y258, and W290. A disulfide bridge connects residues C223 and C242. D230 provides a ligand contact to Mn(2+). 292 to 295 (GEDD) contributes to the N-acetyl-D-glucosamine binding site. A glycan (N-linked (GlcNAc...) asparagine) is linked at N307. H323 lines the Mn(2+) pocket. 323–324 (HH) is a binding site for UDP-alpha-D-galactose. Residue R334 coordinates N-acetyl-D-glucosamine. An N-linked (GlcNAc...) asparagine glycan is attached at N367.

Belongs to the glycosyltransferase 7 family. It depends on Mn(2+) as a cofactor. The cofactor is Mg(2+). In terms of tissue distribution, high expression in brain and adrenal gland, lower in liver, lung, colon and peripheral white blood cells.

It localises to the golgi apparatus. Its subcellular location is the golgi stack membrane. The catalysed reaction is a beta-D-glucosyl-(1&lt;-&gt;1')-N-acylsphing-4-enine + UDP-alpha-D-galactose = a beta-D-Gal-(1-&gt;4)-beta-D-Glc-(1&lt;-&gt;1)-Cer(d18:1(4E)) + UDP + H(+). Its pathway is protein modification; protein glycosylation. It functions in the pathway sphingolipid metabolism. Its activity is regulated as follows. Inhibited by EDTA. Catalyzes the synthesis of lactosylceramide (LacCer) via the transfer of galactose from UDP-galactose to glucosylceramide (GlcCer). LacCer is the starting point in the biosynthesis of all gangliosides (membrane-bound glycosphingolipids) which play pivotal roles in the CNS including neuronal maturation and axonal and myelin formation. This Homo sapiens (Human) protein is Beta-1,4-galactosyltransferase 6.